Reading from the N-terminus, the 71-residue chain is Omega-conotoxin SO-3 (71 aa).

Residues 1-22 (MKLTCMVIVAVLLLTACQLITA) form the signal peptide. A propeptide spanning residues 23–45 (DDSRGTQKHRTLRSKTKLSMSTR) is cleaved from the precursor. Intrachain disulfides connect Cys-46/Cys-61, Cys-53/Cys-65, and Cys-60/Cys-70. Cys-70 is modified (cysteine amide).

It belongs to the conotoxin O1 superfamily. As to expression, expressed by the venom duct.

It is found in the secreted. In terms of biological role, omega-conotoxins act at presynaptic membranes, they bind and block voltage-gated calcium channels (Cav). This peptide selectively targets Cav2.2/CACNA1B (IC(50)=160 nM) voltage-gated calcium channels. When tested in mammals, this toxin displays an analgesic potency similar to MVIIA in a range of acute and chronic pain models in rodents, but has less adverse effects (tremor, diminution of spontaneous locomotor activity and bad coordinated locomotion) compared with identical dosages of MVIIA injected intrathecally. This is Omega-conotoxin SO-3 from Conus striatus (Striated cone).